Here is a 379-residue protein sequence, read N- to C-terminus: Glutamate 5-kinase (379 aa).

Residue Lys17 coordinates ATP. The substrate site is built by Ser57, Asp144, and Asn156. 176–177 (SD) contributes to the ATP binding site. Residues 282–359 (SGILMIDQGA…EEIESILGYE (78 aa)) form the PUA domain.

It belongs to the glutamate 5-kinase family.

Its subcellular location is the cytoplasm. The enzyme catalyses L-glutamate + ATP = L-glutamyl 5-phosphate + ADP. The protein operates within amino-acid biosynthesis; L-proline biosynthesis; L-glutamate 5-semialdehyde from L-glutamate: step 1/2. Functionally, catalyzes the transfer of a phosphate group to glutamate to form L-glutamate 5-phosphate. The chain is Glutamate 5-kinase from Bartonella henselae (strain ATCC 49882 / DSM 28221 / CCUG 30454 / Houston 1) (Rochalimaea henselae).